The following is a 153-amino-acid chain: Ribonuclease H (153 aa).

The region spanning Met-1–Ser-141 is the RNase H type-1 domain. Residues Asp-9, Glu-47, Asp-69, and Asp-133 each contribute to the Mg(2+) site.

Belongs to the RNase H family. Monomer. Requires Mg(2+) as cofactor.

The protein localises to the cytoplasm. The catalysed reaction is Endonucleolytic cleavage to 5'-phosphomonoester.. In terms of biological role, endonuclease that specifically degrades the RNA of RNA-DNA hybrids. This chain is Ribonuclease H, found in Pseudoalteromonas atlantica (strain T6c / ATCC BAA-1087).